We begin with the raw amino-acid sequence, 146 residues long: 3-hydroxyacyl-[acyl-carrier-protein] dehydratase FabZ (146 aa).

His48 is an active-site residue.

It belongs to the thioester dehydratase family. FabZ subfamily.

The protein resides in the cytoplasm. The enzyme catalyses a (3R)-hydroxyacyl-[ACP] = a (2E)-enoyl-[ACP] + H2O. Involved in unsaturated fatty acids biosynthesis. Catalyzes the dehydration of short chain beta-hydroxyacyl-ACPs and long chain saturated and unsaturated beta-hydroxyacyl-ACPs. In Campylobacter lari (strain RM2100 / D67 / ATCC BAA-1060), this protein is 3-hydroxyacyl-[acyl-carrier-protein] dehydratase FabZ.